The following is a 288-amino-acid chain: Protease HtpX homolog (288 aa).

Transmembrane regions (helical) follow at residues methionine 1–glycine 21 and isoleucine 23–phenylalanine 43. Histidine 130 provides a ligand contact to Zn(2+). Glutamate 131 is a catalytic residue. Residue histidine 134 coordinates Zn(2+). The next 2 helical transmembrane spans lie at isoleucine 140–alanine 160 and isoleucine 175–isoleucine 195. Glutamate 204 provides a ligand contact to Zn(2+).

This sequence belongs to the peptidase M48B family. Requires Zn(2+) as cofactor.

The protein resides in the cell inner membrane. The protein is Protease HtpX homolog of Persephonella marina (strain DSM 14350 / EX-H1).